A 216-amino-acid chain; its full sequence is MKKPYRKISDYAIVGGLSALVMVSIVGCKSNADDKPKEQSSLSQSVQKGAFVILEEQKDKSYKVVEEYPSSRTHIVVRDLQGNERVLSDEEIQKLIKEEEAKIDNGTSKLVQPNNGGGSNEGSGFGLGSAILGSAAGAILGSYIGNKLFNNPNYQQNAQRTYKSPQAYQRSQNSFSKSAPSASGMGTASKGQSGFFGSSRPTSSPAVSSGTRGFNA.

An N-terminal signal peptide occupies residues 1–27 (MKKPYRKISDYAIVGGLSALVMVSIVG). The N-palmitoyl cysteine moiety is linked to residue C28. C28 carries the S-diacylglycerol cysteine lipid modification. Residues 159 to 196 (QRTYKSPQAYQRSQNSFSKSAPSASGMGTASKGQSGFF) show a composition bias toward polar residues. The disordered stretch occupies residues 159–216 (QRTYKSPQAYQRSQNSFSKSAPSASGMGTASKGQSGFFGSSRPTSSPAVSSGTRGFNA). A compositionally biased stretch (low complexity) spans 198–209 (SSRPTSSPAVSS).

Belongs to the UPF0323 family.

The protein localises to the cell membrane. This is UPF0323 lipoprotein HPAG1_0235 from Helicobacter pylori (strain HPAG1).